Reading from the N-terminus, the 313-residue chain is Homoserine O-succinyltransferase (313 aa).

The active-site Acyl-thioester intermediate is cysteine 142. Substrate contacts are provided by lysine 163 and serine 192. The active-site Proton acceptor is the histidine 235. The active site involves glutamate 237. Arginine 249 provides a ligand contact to substrate.

It belongs to the MetA family.

It localises to the cytoplasm. The catalysed reaction is L-homoserine + succinyl-CoA = O-succinyl-L-homoserine + CoA. It participates in amino-acid biosynthesis; L-methionine biosynthesis via de novo pathway; O-succinyl-L-homoserine from L-homoserine: step 1/1. In terms of biological role, transfers a succinyl group from succinyl-CoA to L-homoserine, forming succinyl-L-homoserine. The protein is Homoserine O-succinyltransferase of Shewanella oneidensis (strain ATCC 700550 / JCM 31522 / CIP 106686 / LMG 19005 / NCIMB 14063 / MR-1).